A 242-amino-acid chain; its full sequence is uncharacterized protein (242 aa).

3 consecutive transmembrane segments (helical) span residues 75–95 (YAIF…HNFY), 116–136 (IVLI…FSLI), and 176–196 (IQGL…LEVI). The segment at 204–242 (DVEMSSMRGQAITTEPASDNTMAEGTDCNTSKDVESGSS) is disordered. Residues 210-232 (MRGQAITTEPASDNTMAEGTDCN) show a composition bias toward polar residues. A compositionally biased stretch (basic and acidic residues) spans 233–242 (TSKDVESGSS).

The protein localises to the cytoplasm. Its subcellular location is the membrane. This is an uncharacterized protein from Schizosaccharomyces pombe (strain 972 / ATCC 24843) (Fission yeast).